Consider the following 302-residue polypeptide: Phosphoribosylaminoimidazole-succinocarboxamide synthase (302 aa).

This sequence belongs to the SAICAR synthetase family.

It catalyses the reaction 5-amino-1-(5-phospho-D-ribosyl)imidazole-4-carboxylate + L-aspartate + ATP = (2S)-2-[5-amino-1-(5-phospho-beta-D-ribosyl)imidazole-4-carboxamido]succinate + ADP + phosphate + 2 H(+). It participates in purine metabolism; IMP biosynthesis via de novo pathway; 5-amino-1-(5-phospho-D-ribosyl)imidazole-4-carboxamide from 5-amino-1-(5-phospho-D-ribosyl)imidazole-4-carboxylate: step 1/2. In Cupriavidus taiwanensis (strain DSM 17343 / BCRC 17206 / CCUG 44338 / CIP 107171 / LMG 19424 / R1) (Ralstonia taiwanensis (strain LMG 19424)), this protein is Phosphoribosylaminoimidazole-succinocarboxamide synthase.